A 74-amino-acid chain; its full sequence is Exodeoxyribonuclease 7 small subunit (74 aa).

This sequence belongs to the XseB family. As to quaternary structure, heterooligomer composed of large and small subunits.

Its subcellular location is the cytoplasm. The enzyme catalyses Exonucleolytic cleavage in either 5'- to 3'- or 3'- to 5'-direction to yield nucleoside 5'-phosphates.. In terms of biological role, bidirectionally degrades single-stranded DNA into large acid-insoluble oligonucleotides, which are then degraded further into small acid-soluble oligonucleotides. This Clostridium botulinum (strain Eklund 17B / Type B) protein is Exodeoxyribonuclease 7 small subunit.